The following is a 446-amino-acid chain: COBRA-like protein 1 (446 aa).

Positions 1–28 are cleaved as a signal peptide; it reads MALLLLRMGVSVALLVAFFSSLIPSSEA. N-linked (GlcNAc...) asparagine glycosylation is found at Asn-37, Asn-162, Asn-170, Asn-209, Asn-234, Asn-316, Asn-331, Asn-350, and Asn-419. Residue Ala-420 is the site of GPI-anchor amidated alanine attachment. A propeptide spans 421 to 446 (removed in mature form); sequence STRVMSSILLPFITIWTALTFLMVYA.

The protein belongs to the COBRA family.

Its subcellular location is the cell membrane. Its function is as follows. Involved in determining the orientation of cell expansion, probably by playing an important role in cellulose deposition. May act by recruiting cellulose synthesizing complexes to discrete positions on the cell surface. This chain is COBRA-like protein 1 (BC1L6), found in Oryza sativa subsp. japonica (Rice).